The sequence spans 412 residues: Gamma-glutamyl phosphate reductase (412 aa).

Belongs to the gamma-glutamyl phosphate reductase family.

The protein resides in the cytoplasm. It carries out the reaction L-glutamate 5-semialdehyde + phosphate + NADP(+) = L-glutamyl 5-phosphate + NADPH + H(+). It functions in the pathway amino-acid biosynthesis; L-proline biosynthesis; L-glutamate 5-semialdehyde from L-glutamate: step 2/2. Catalyzes the NADPH-dependent reduction of L-glutamate 5-phosphate into L-glutamate 5-semialdehyde and phosphate. The product spontaneously undergoes cyclization to form 1-pyrroline-5-carboxylate. In Bartonella bacilliformis (strain ATCC 35685 / KC583 / Herrer 020/F12,63), this protein is Gamma-glutamyl phosphate reductase.